The following is a 957-amino-acid chain: Outer kinetochore KNL1 complex subunit knl-1 (957 aa).

Repeat unit 1 spans residues 87 to 90 (MDIT). The segment at 87–393 (MDITGLNSTP…NFDDVAMDIT (307 aa)) is 8 X 4 AA repeats of M-[D/E]-[I/L/M]-[S/T]. The segment at 89-111 (ITGLNSTPVTPKTQTPFNGSMDM) is disordered. Residues 91–106 (GLNSTPVTPKTQTPFN) are compositionally biased toward polar residues. 7 tandem repeats follow at residues 109-112 (MDMS), 206-209 (MDIT), 251-254 (MDIT), 282-285 (MDLT), 326-329 (MEMT), 367-370 (MEMT), and 390-393 (MDIT). Positions 476–504 (SLQQSSMRMSTTITEDVTASKNPESSTIS) are disordered. Residues 830–950 (KFAKESNVEI…RKKKEEMVER (121 aa)) adopt a coiled-coil conformation.

As to quaternary structure, component of the KNL1 complex composed of knl-1 and kbp-5. Part of the ten-subunit outer kinetochore KMN network that includes the KNL1, MIS12 and NDC80 complexes. Interacts with the protein phosphatase 1 (PP1) catalytic subunit gsp-1; the interaction is direct. Interacts with the protein phosphatase 1 (PP1) catalytic subunit gsp-2; the interaction is direct. Interacts with the MIS12 complex subunits kbp-1, kbp-2 and mis-12. Interacts with the NDC80 complex components ndc-80 and him-10. Interacts with knl-3. Interacts with kbp-3. Interacts with kbp-4. Interacts with kbp-5.

It localises to the cytoplasm. It is found in the cell cortex. Its subcellular location is the chromosome. The protein localises to the centromere. The protein resides in the kinetochore. Acts as a component of the outer kinetochore KNL1 complex that serves as a docking point for spindle assembly checkpoint components and mediates microtubule-kinetochore interactions. Kinetochores, consisting of a centromere-associated inner segment and a microtubule-contacting outer segment, play a crucial role in chromosome segregation by mediating the physical connection between centromeric DNA and spindle microtubules. The outer kinetochore is made up of the ten-subunit KMN network, comprising the MIS12, NDC80 and KNL1 complexes, and auxiliary microtubule-associated components; together they connect the outer kinetochore with the inner kinetochore, bind microtubules, and mediate interactions with mitotic checkpoint proteins that delay anaphase until chromosomes are bioriented on the spindle. Binds the protein phosphatase 1 catalytic subunits gsp-1 and gsp-2, which has a role in delaying formation of load-bearing kinetochore-microtubule attachments. Required for the recruitment of spindle-assembly checkpoint components bub-1 and mdf-1/2 to unattached kinetochores. Binds microtubules which plays a role in silencing of the spindle assembly checkpoint, but not the formation of load-bearing microtubule-kinetochore attachments. Has a role in the correct localization of the spindly-like protein spdl-1 and the RZZ complex that is composed of rod-1, czw-1 and zwl-1 to kinetochores. In Caenorhabditis briggsae, this protein is Outer kinetochore KNL1 complex subunit knl-1.